The following is a 261-amino-acid chain: Probable septum site-determining protein MinC (261 aa).

The tract at residues 106–144 is disordered; the sequence is RAPAAKPADEAEPAAVPAVETAAAPAAAAAPEQSSDPAP. The segment covering 118 to 144 has biased composition (low complexity); the sequence is PAAVPAVETAAAPAAAAAPEQSSDPAP.

The protein belongs to the MinC family. In terms of assembly, interacts with MinD and FtsZ.

Cell division inhibitor that blocks the formation of polar Z ring septums. Rapidly oscillates between the poles of the cell to destabilize FtsZ filaments that have formed before they mature into polar Z rings. Prevents FtsZ polymerization. In Burkholderia orbicola (strain MC0-3), this protein is Probable septum site-determining protein MinC.